Reading from the N-terminus, the 203-residue chain is Formate hydrogenlyase subunit 2 (203 aa).

4 4Fe-4S ferredoxin-type domains span residues 2-32 (NRFV…HGLQ), 42-72 (NEKE…TRVD), 73-102 (GAVQ…FSGS), and 137-169 (RAIA…LVDN). [4Fe-4S] cluster contacts are provided by C12, C15, C18, C22, C51, C54, C59, C63, C82, C85, C88, C92, C143, C146, C155, and C159.

In terms of assembly, FHL comprises of a formate dehydrogenase, unidentified electron carriers and a hydrogenase (isoenzyme 3). In this non-energy conserving pathway, molecular hydrogen and carbodioxide are released from formate. Requires [4Fe-4S] cluster as cofactor.

Probable electron transfer protein for hydrogenase 3. The sequence is that of Formate hydrogenlyase subunit 2 (hycB) from Escherichia coli (strain K12).